The chain runs to 59 residues: Large ribosomal subunit protein bL32 (59 aa).

The interval 1 to 20 is disordered; it reads MAVPRNRHSNARKNIRRSHH.

The protein belongs to the bacterial ribosomal protein bL32 family.

The protein is Large ribosomal subunit protein bL32 (rpmF) of Chlamydia muridarum (strain MoPn / Nigg).